Consider the following 867-residue polypeptide: Bifunctional isopimaradiene synthase, chloroplastic (867 aa).

Residues 1 to 68 (MALLSSSLSS…VGEGTTSLPY (68 aa)) constitute a chloroplast transit peptide. Lys-267 provides a ligand contact to substrate. Mg(2+)-binding residues include Asp-400 and Asp-402. A DXDD motif motif is present at residues 400 to 403 (DIDD). Substrate is bound at residue Lys-487. Residues Asp-619, Asp-623, Asn-763, Thr-767, and Glu-771 each coordinate Mg(2+). Residues 619–623 (DDLYD) carry the DDXXD motif motif.

This sequence belongs to the terpene synthase family. Tpsd subfamily. The cofactor is Mg(2+).

The protein resides in the plastid. It is found in the chloroplast. The catalysed reaction is (2E,6E,10E)-geranylgeranyl diphosphate = (+)-copalyl diphosphate. It catalyses the reaction (+)-copalyl diphosphate = isopimara-7,15-diene + diphosphate. Its pathway is terpene metabolism; oleoresin biosynthesis. Its function is as follows. Involved in defensive oleoresin formation in conifers in response to insect attack or other injury. Involved in diterpene (C20) olefins biosynthesis. Bifunctional enzyme that catalyzes two sequential cyclizations of geranylgeranyl diphosphate (GGPP) to isopimara-7,15-diene. This is Bifunctional isopimaradiene synthase, chloroplastic (TPS-ISO) from Picea abies (Norway spruce).